Reading from the N-terminus, the 384-residue chain is Queuine tRNA-ribosyltransferase (384 aa).

D92 serves as the catalytic Proton acceptor. Substrate is bound by residues 92–96, D146, Q190, and G217; that span reads DSGGF. An RNA binding region spans residues 248 to 254; the sequence is GVGRPED. The active-site Nucleophile is D267. Residues 272–276 are RNA binding; important for wobble base 34 recognition; the sequence is TRHAR. The Zn(2+) site is built by C305, C307, C310, and H337.

The protein belongs to the queuine tRNA-ribosyltransferase family. As to quaternary structure, homodimer. Within each dimer, one monomer is responsible for RNA recognition and catalysis, while the other monomer binds to the replacement base PreQ1. Zn(2+) is required as a cofactor.

The catalysed reaction is 7-aminomethyl-7-carbaguanine + guanosine(34) in tRNA = 7-aminomethyl-7-carbaguanosine(34) in tRNA + guanine. It functions in the pathway tRNA modification; tRNA-queuosine biosynthesis. In terms of biological role, catalyzes the base-exchange of a guanine (G) residue with the queuine precursor 7-aminomethyl-7-deazaguanine (PreQ1) at position 34 (anticodon wobble position) in tRNAs with GU(N) anticodons (tRNA-Asp, -Asn, -His and -Tyr). Catalysis occurs through a double-displacement mechanism. The nucleophile active site attacks the C1' of nucleotide 34 to detach the guanine base from the RNA, forming a covalent enzyme-RNA intermediate. The proton acceptor active site deprotonates the incoming PreQ1, allowing a nucleophilic attack on the C1' of the ribose to form the product. After dissociation, two additional enzymatic reactions on the tRNA convert PreQ1 to queuine (Q), resulting in the hypermodified nucleoside queuosine (7-(((4,5-cis-dihydroxy-2-cyclopenten-1-yl)amino)methyl)-7-deazaguanosine). The chain is Queuine tRNA-ribosyltransferase from Xylella fastidiosa (strain M12).